A 921-amino-acid polypeptide reads, in one-letter code: Isoleucine--tRNA ligase (921 aa).

A 'HIGH' region motif is present at residues 57 to 67; it reads PYANGDIHMGH. Glu-552 is an L-isoleucyl-5'-AMP binding site. The 'KMSKS' region signature appears at 593 to 597; that stretch reads KMSKS. Lys-596 is an ATP binding site. Zn(2+) contacts are provided by Cys-888, Cys-891, Cys-908, and Cys-911.

The protein belongs to the class-I aminoacyl-tRNA synthetase family. IleS type 1 subfamily. As to quaternary structure, monomer. Zn(2+) serves as cofactor.

The protein resides in the cytoplasm. The catalysed reaction is tRNA(Ile) + L-isoleucine + ATP = L-isoleucyl-tRNA(Ile) + AMP + diphosphate. Functionally, catalyzes the attachment of isoleucine to tRNA(Ile). As IleRS can inadvertently accommodate and process structurally similar amino acids such as valine, to avoid such errors it has two additional distinct tRNA(Ile)-dependent editing activities. One activity is designated as 'pretransfer' editing and involves the hydrolysis of activated Val-AMP. The other activity is designated 'posttransfer' editing and involves deacylation of mischarged Val-tRNA(Ile). This Bacillus cereus (strain 03BB102) protein is Isoleucine--tRNA ligase.